Here is an 831-residue protein sequence, read N- to C-terminus: Periplasmic nitrate reductase (831 aa).

A signal peptide (tat-type signal) is located at residues 1–38; the sequence is MSMARRDFIKQTAAAAAATVAGVPLTGYTQNIVTESEA. The region spanning 41-97 is the 4Fe-4S Mo/W bis-MGD-type domain; sequence LKWSKAPCRFCGTGCGVNVAVKDNQVVATHGDFNAEVNKGLNCVKGYFLSKIMYGSD. Residues Cys48, Cys51, Cys55, and Cys83 each contribute to the [4Fe-4S] cluster site. Mo-bis(molybdopterin guanine dinucleotide) is bound by residues Lys85, Gln152, Asn177, Cys181, 214–221, 245–249, 264–266, Met375, Gln379, Asn485, 511–512, Lys534, Asp561, and 721–730; these read WGSNMAEM, STFEH, QSD, SD, and TGRVLEHWHS. Trp797 contacts substrate. Positions 805 and 822 each coordinate Mo-bis(molybdopterin guanine dinucleotide).

It belongs to the prokaryotic molybdopterin-containing oxidoreductase family. NasA/NapA/NarB subfamily. As to quaternary structure, component of the periplasmic nitrate reductase NapAB complex composed of NapA and NapB. [4Fe-4S] cluster serves as cofactor. Mo-bis(molybdopterin guanine dinucleotide) is required as a cofactor. Post-translationally, predicted to be exported by the Tat system. The position of the signal peptide cleavage has not been experimentally proven.

The protein resides in the periplasm. The enzyme catalyses 2 Fe(II)-[cytochrome] + nitrate + 2 H(+) = 2 Fe(III)-[cytochrome] + nitrite + H2O. Catalytic subunit of the periplasmic nitrate reductase complex NapAB. Receives electrons from NapB and catalyzes the reduction of nitrate to nitrite. This is Periplasmic nitrate reductase from Bordetella parapertussis (strain 12822 / ATCC BAA-587 / NCTC 13253).